Reading from the N-terminus, the 620-residue chain is Rhamnogalacturonan endolyase YesW (620 aa).

Positions 1 to 37 (MRRSCLMIRRRKRMFTAVTLLVLLVMGTSVCPVKAEG) are cleaved as a signal peptide. A disordered region spans residues 133-152 (LDKPAGGTTPKGESYTYSAN). Substrate is bound at residue Asn152. Ca(2+) is bound by residues Asp153, Asp158, Asp160, Asp162, Gln164, and Glu166. Asp172 provides a ligand contact to substrate. A carbohydrate-binding residues include Asp187 and Lys207. Residues Asp222, Asp224, Asp226, Lys228, and Glu230 each coordinate Ca(2+). A carbohydrate-binding residues include Gly238 and Arg255. His363, Asp369, Asp371, Asp373, Lys375, Glu377, Asp386, His387, His399, Asp401, Asp407, Asp409, Arg412, Gly414, Glu416, and Glu422 together coordinate Ca(2+). A substrate-binding site is contributed by Arg452. Ca(2+)-binding residues include Asp457, Asp459, Tyr462, Gly464, Glu466, Asp496, Asp498, Leu500, and Glu502. Substrate is bound at residue 532–534 (NGT). Asp543, Leu545, Asp547, Arg549, Glu551, Asn592, and Ala594 together coordinate Ca(2+). Tyr595 is a binding site for substrate. Asn596 contacts Ca(2+).

Belongs to the polysaccharide lyase 11 family. In terms of assembly, monomer. Ca(2+) is required as a cofactor. It depends on Mn(2+) as a cofactor.

It is found in the secreted. The enzyme catalyses Endotype eliminative cleavage of L-alpha-rhamnopyranosyl-(1-&gt;4)-alpha-D-galactopyranosyluronic acid bonds of rhamnogalacturonan I domains in ramified hairy regions of pectin leaving L-rhamnopyranose at the reducing end and 4-deoxy-4,5-unsaturated D-galactopyranosyluronic acid at the non-reducing end.. Pectinolytic enzyme that degrades type I rhamnogalacturonan from plant cell walls and releases oligosaccharide products. Degrades rhamnogalacturonan, polygalacturonic acid, pectic acid and pectin. This chain is Rhamnogalacturonan endolyase YesW (yesW), found in Bacillus subtilis (strain 168).